The sequence spans 365 residues: Aminomethyltransferase (365 aa).

The protein belongs to the GcvT family. As to quaternary structure, the glycine cleavage system is composed of four proteins: P, T, L and H.

The catalysed reaction is N(6)-[(R)-S(8)-aminomethyldihydrolipoyl]-L-lysyl-[protein] + (6S)-5,6,7,8-tetrahydrofolate = N(6)-[(R)-dihydrolipoyl]-L-lysyl-[protein] + (6R)-5,10-methylene-5,6,7,8-tetrahydrofolate + NH4(+). In terms of biological role, the glycine cleavage system catalyzes the degradation of glycine. This chain is Aminomethyltransferase, found in Chlorobium luteolum (strain DSM 273 / BCRC 81028 / 2530) (Pelodictyon luteolum).